A 498-amino-acid chain; its full sequence is Probable cytosol aminopeptidase (498 aa).

The Mn(2+) site is built by K264 and D269. K276 is an active-site residue. Residues D287, D346, and E348 each coordinate Mn(2+). The active site involves R350.

It belongs to the peptidase M17 family. Mn(2+) serves as cofactor.

The protein resides in the cytoplasm. The catalysed reaction is Release of an N-terminal amino acid, Xaa-|-Yaa-, in which Xaa is preferably Leu, but may be other amino acids including Pro although not Arg or Lys, and Yaa may be Pro. Amino acid amides and methyl esters are also readily hydrolyzed, but rates on arylamides are exceedingly low.. The enzyme catalyses Release of an N-terminal amino acid, preferentially leucine, but not glutamic or aspartic acids.. Presumably involved in the processing and regular turnover of intracellular proteins. Catalyzes the removal of unsubstituted N-terminal amino acids from various peptides. The chain is Probable cytosol aminopeptidase from Brucella anthropi (strain ATCC 49188 / DSM 6882 / CCUG 24695 / JCM 21032 / LMG 3331 / NBRC 15819 / NCTC 12168 / Alc 37) (Ochrobactrum anthropi).